Reading from the N-terminus, the 529-residue chain is Bifunctional purine biosynthesis protein PurH (529 aa).

In terms of domain architecture, MGS-like spans 1–148 (MNNARPIRRA…KNHKDTTIIV (148 aa)).

This sequence belongs to the PurH family.

It carries out the reaction (6R)-10-formyltetrahydrofolate + 5-amino-1-(5-phospho-beta-D-ribosyl)imidazole-4-carboxamide = 5-formamido-1-(5-phospho-D-ribosyl)imidazole-4-carboxamide + (6S)-5,6,7,8-tetrahydrofolate. The catalysed reaction is IMP + H2O = 5-formamido-1-(5-phospho-D-ribosyl)imidazole-4-carboxamide. It participates in purine metabolism; IMP biosynthesis via de novo pathway; 5-formamido-1-(5-phospho-D-ribosyl)imidazole-4-carboxamide from 5-amino-1-(5-phospho-D-ribosyl)imidazole-4-carboxamide (10-formyl THF route): step 1/1. Its pathway is purine metabolism; IMP biosynthesis via de novo pathway; IMP from 5-formamido-1-(5-phospho-D-ribosyl)imidazole-4-carboxamide: step 1/1. The sequence is that of Bifunctional purine biosynthesis protein PurH from Shewanella halifaxensis (strain HAW-EB4).